The primary structure comprises 396 residues: MLDAQTIATVKATIPLLVETGPKLTAHFYDRMFTHNPELKEIFNMSNQRNGDQREALFNAIAAYASNIENLPALLPAVEKIAQKHTSFQIKPEQYNIVGTHLLATLDEMFNPGQEVLDAWGKAYGVLANVFIHREAEIYHENASKDGGWEGTRPFRIVAKTPRSALITSFEFEPVDGGTVAEYRPGQYLGVWLKPEGFAHQEIRQYSLTRKPDGKGYRIAVKREDGGQVSNWLHHHANVGDVVHLAAPAGDFFMNVAADTPVSLISAGVGQTPMLAMLDTLAKEQHTAQVNWFHAAENGDVHAFADEVSELGRTLPRFTAHTWYREPTEADRAQRVFDSEGLMDLSKLEAAISDPAMQFYLCGPVGFMQFAAKQLVSLGVNNENIHYECFGPHKVL.

The Globin domain maps to methionine 1–alanine 136. Histidine 85 is a binding site for heme b. Catalysis depends on charge relay system residues tyrosine 95 and glutamate 135. Residues glycine 147 to leucine 396 are reductase. An FAD-binding FR-type domain is found at glutamate 150–asparagine 255. Residues tyrosine 188 and arginine 204–serine 207 contribute to the FAD site. Residue glycine 268–proline 273 coordinates NADP(+). Cysteine 389–proline 392 is a binding site for FAD.

It belongs to the globin family. Two-domain flavohemoproteins subfamily. The protein in the C-terminal section; belongs to the flavoprotein pyridine nucleotide cytochrome reductase family. Heme b serves as cofactor. It depends on FAD as a cofactor.

The enzyme catalyses 2 nitric oxide + NADPH + 2 O2 = 2 nitrate + NADP(+) + H(+). It catalyses the reaction 2 nitric oxide + NADH + 2 O2 = 2 nitrate + NAD(+) + H(+). Functionally, is involved in NO detoxification in an aerobic process, termed nitric oxide dioxygenase (NOD) reaction that utilizes O(2) and NAD(P)H to convert NO to nitrate, which protects the bacterium from various noxious nitrogen compounds. Therefore, plays a central role in the inducible response to nitrosative stress. The sequence is that of Flavohemoprotein from Salmonella typhi.